The chain runs to 110 residues: Iron-sulfur cluster assembly protein CyaY (110 aa).

The protein belongs to the frataxin family.

In terms of biological role, involved in iron-sulfur (Fe-S) cluster assembly. May act as a regulator of Fe-S biogenesis. The protein is Iron-sulfur cluster assembly protein CyaY of Pseudomonas fluorescens (strain ATCC BAA-477 / NRRL B-23932 / Pf-5).